The following is a 476-amino-acid chain: FAD-dependent monooxygenase dpasE (476 aa).

The N-terminal stretch at 1 to 21 is a signal peptide; that stretch reads MSQPAFKIIIVGCSVTGLTLA. Residues Glu35, Ala49, and Arg109 each coordinate FAD. N-linked (GlcNAc...) asparagine glycans are attached at residues Asn190 and Asn219. FAD-binding residues include Asp308 and Ala321. A helical transmembrane segment spans residues 441–461; it reads GAGFWITAFLSLSLLAVAATM.

Belongs to the paxM FAD-dependent monooxygenase family. FAD serves as cofactor.

The protein resides in the membrane. The protein operates within secondary metabolite biosynthesis; terpenoid biosynthesis. In terms of biological role, FAD-dependent monooxygenase; part of the gene cluster that mediates the biosynthesis of the diterpenoid pyrones subglutinols A and B. The first step of the pathway is the synthesis of the alpha-pyrone moiety by the polyketide synthase dpasA via condensation of one acetyl-CoA starter unit with 3 malonyl-CoA units and 2 methylations. The alpha-pyrone is then combined with geranylgeranyl pyrophosphate (GGPP) formed by the GGPP synthase dpasD through the action of the prenyltransferase dpasC to yield a linear alpha-pyrone diterpenoid. Subsequent steps in the diterpenoid pyrone biosynthetic pathway involve the decalin core formation, which is initiated by the epoxidation of the C10-C11 olefin by the FAD-dependent oxidoreductase dpasE, and is followed by a cyclization cascade catalyzed by the terpene cyclase dpasB. The FAD-linked oxidoreductase dpasF is then involved in tetrahydrofuran (THF) ring formation at the C5 unit to complete the formation of subglutinols A and B. DpasF possesses also an additional catalytic ability of multi-step oxidations to generate a new DDP analog with an enone system at the C5 named FDDP A. The sequence is that of FAD-dependent monooxygenase dpasE from Apiospora sacchari (Arthrinium sacchari).